The primary structure comprises 275 residues: Testis-specific gene 13 protein (275 aa).

Polar residues predominate over residues 1–20; it reads MSQKRQTKFQNGKSKTSENS. The segment at 1-28 is disordered; that stretch reads MSQKRQTKFQNGKSKTSENSSAKREKGM.

In terms of tissue distribution, testis-specific.

The sequence is that of Testis-specific gene 13 protein (TSGA13) from Homo sapiens (Human).